Reading from the N-terminus, the 481-residue chain is Glutamate--tRNA ligase 1 (481 aa).

The short motif at 11–21 (PSPTGSLHIGG) is the 'HIGH' region element. The 'KMSKS' region signature appears at 244–248 (KLSKR). An ATP-binding site is contributed by Lys-247.

This sequence belongs to the class-I aminoacyl-tRNA synthetase family. Glutamate--tRNA ligase type 1 subfamily. As to quaternary structure, monomer.

Its subcellular location is the cytoplasm. It catalyses the reaction tRNA(Glu) + L-glutamate + ATP = L-glutamyl-tRNA(Glu) + AMP + diphosphate. Catalyzes the attachment of glutamate to tRNA(Glu) in a two-step reaction: glutamate is first activated by ATP to form Glu-AMP and then transferred to the acceptor end of tRNA(Glu). The chain is Glutamate--tRNA ligase 1 from Caldanaerobacter subterraneus subsp. tengcongensis (strain DSM 15242 / JCM 11007 / NBRC 100824 / MB4) (Thermoanaerobacter tengcongensis).